We begin with the raw amino-acid sequence, 70 residues long: UPF0150 protein TM_1311 (70 aa).

It belongs to the UPF0150 family.

This is UPF0150 protein TM_1311 from Thermotoga maritima (strain ATCC 43589 / DSM 3109 / JCM 10099 / NBRC 100826 / MSB8).